The chain runs to 454 residues: Phosphoglucosamine mutase (454 aa).

The active-site Phosphoserine intermediate is the S101. S101, D243, D245, and D247 together coordinate Mg(2+). Position 101 is a phosphoserine (S101).

The protein belongs to the phosphohexose mutase family. Mg(2+) serves as cofactor. Post-translationally, activated by phosphorylation.

The enzyme catalyses alpha-D-glucosamine 1-phosphate = D-glucosamine 6-phosphate. Functionally, catalyzes the conversion of glucosamine-6-phosphate to glucosamine-1-phosphate. The protein is Phosphoglucosamine mutase of Geotalea daltonii (strain DSM 22248 / JCM 15807 / FRC-32) (Geobacter daltonii).